The primary structure comprises 390 residues: S-adenosylmethionine:tRNA ribosyltransferase-isomerase (390 aa).

The interval 1 to 22 is disordered; that stretch reads MTQPLSQDQHDSSSNMPTDNAE.

Belongs to the QueA family. As to quaternary structure, monomer.

The protein resides in the cytoplasm. It catalyses the reaction 7-aminomethyl-7-carbaguanosine(34) in tRNA + S-adenosyl-L-methionine = epoxyqueuosine(34) in tRNA + adenine + L-methionine + 2 H(+). Its pathway is tRNA modification; tRNA-queuosine biosynthesis. Transfers and isomerizes the ribose moiety from AdoMet to the 7-aminomethyl group of 7-deazaguanine (preQ1-tRNA) to give epoxyqueuosine (oQ-tRNA). This Psychrobacter sp. (strain PRwf-1) protein is S-adenosylmethionine:tRNA ribosyltransferase-isomerase.